We begin with the raw amino-acid sequence, 614 residues long: Zinc metalloproteinase-disintegrin-like protein H4 subunit A (614 aa).

An N-terminal signal peptide occupies residues 1–20 (MIQPLLVVTCLVVFPYQVSS). The propeptide occupies 21–193 (IILESGNVND…RKASQLVATS (173 aa)). A Pyrrolidone carboxylic acid (Glu) modification is found at Glu194. In terms of domain architecture, Peptidase M12B spans 201–397 (KYIELVIVVD…IKSKCIDNKP (197 aa)). Asn220 carries an N-linked (GlcNAc...) asparagine glycan. Intrachain disulfides connect Cys312/Cys392, Cys352/Cys376, Cys354/Cys359, Cys408/Cys437, Cys419/Cys432, Cys421/Cys427, Cys431/Cys454, Cys445/Cys451, Cys450/Cys476, Cys463/Cys483, Cys470/Cys502, Cys495/Cys507, Cys514/Cys564, Cys529/Cys575, Cys542/Cys552, Cys559/Cys601, and Cys595/Cys607. His337 is a Zn(2+) binding site. Residues 337 to 348 (HELGHNLGMDHD) carry the Metal-binding motif. Glu338 (proton acceptor) is an active-site residue. Zn(2+) contacts are provided by His341 and His347. The Disintegrin domain maps to 405–491 (PAFCGNYFVE…ECPTDVLQRN (87 aa)). Residues Asn410, Phe412, Glu414, Glu417, and Asp420 each contribute to the Ca(2+) site. The N-linked (GlcNAc...) asparagine glycan is linked to Asn433. The D/ECD-tripeptide signature appears at 469 to 471 (ECD). 2 residues coordinate Ca(2+): Asp471 and Asp486.

The protein belongs to the venom metalloproteinase (M12B) family. P-III subfamily. Homodimer; disulfide-linked. Heterodimer of A and B subunits; disulfide-linked. It depends on Zn(2+) as a cofactor. N-glycosylated. In terms of processing, the N-terminus is blocked. Expressed by the venom gland (at protein level). Expressed by the venom gland.

The protein localises to the secreted. Its activity is regulated as follows. The proteolytic activity of the heterodimer of A and B subunits requires Zn(2+) and Ca(2+) ions. In terms of biological role, heterodimer (A and B subunits): Zinc metalloprotease that has fibrinogenolytic and hemorrhagic activities. Cleaves insulin B chain preferably at '40-Tyr-|-Leu-41' bond, but also at '28-Gln-|-His-29' and '34-His-|-Leu-35' bonds. Hydrolyzes effectively isolated extracellular matrix (ECM) bovine fibronectin, and only slightly, basal membrane (BM) proteins human collagen IV and murine laminin, in vitro. Cleaves nidogen-1 (at '350-Ser-|-Phe-351' and '380-Tyr-|-Asn-381' bonds), but not laminin, in a solubilized BM preparation. Hydrolyzes plasma proteins involved in blood coagulation in vitro. It slightly shortens prothrombin time and significantly prolongs thrombin time. Has potent alpha-fibrinogenase activity cleaving human fibrinogen alpha chain at '441-Glu-|-Leu-442' and '539-Glu-|-Phe-540' bonds, and to a lesser extent, beta chain at '52-Lys-|-Arg-53' and '48-Pro-|-Leu-49' bonds, but does not cleave gamma chain. Hydrolyzes bovine prothrombin at '200-Ser-|-Gly-201' bond, but does not activate it, however, it cleaves fragment 1 and prethrombin 1 from it. Hydrolyzes bovine factor X heavy chain, but the cleavage does not produce an activated factor Xa heavy chain. No hydrolysis or activation of plasminogen. The ability to degrade some of the ECM, BM and plasma proteins is likely the main contributor to its hemorrhagic activity. Inhibits platelet aggregation induced by collagen in vitro. Its binding to glycosaminoglycans (GAGs) may assist in concentrating it in the proximity of blood vessel walls enabling in vivo degradation of BM protein components. Cytotoxic to cultured HeLa cancer cells in a concentration- and time-dependent manner. In the solubilized BM preparation (Matrigel), it induces morphological changes in the HeLa cells and inhibits their adhesion, however, the viability of the cells is not reduced. The polypeptide is Zinc metalloproteinase-disintegrin-like protein H4 subunit A (Vipera ammodytes ammodytes (Western sand viper)).